Reading from the N-terminus, the 155-residue chain is uncharacterized protein (155 aa).

4 helical membrane-spanning segments follow: residues 2–24 (TFLF…PPIF), 62–84 (AVVN…YLVL), 97–116 (VFLI…FLVV), and 131–148 (VVLL…KVFN).

It localises to the cell membrane. This is an uncharacterized protein from Aquifex aeolicus (strain VF5).